The following is a 187-amino-acid chain: NADH-dependent FMN reductase SfnF (187 aa).

This sequence belongs to the SsuE family.

The catalysed reaction is FMNH2 + NAD(+) = FMN + NADH + 2 H(+). In terms of biological role, involved in the dimethyl sulfide degradation pathway. Catalyzes the NADH-dependent reduction of FMN. This chain is NADH-dependent FMN reductase SfnF, found in Pseudomonas fluorescens (strain Pf0-1).